The sequence spans 453 residues: Bifunctional protein GlmU (453 aa).

Positions 1 to 231 are pyrophosphorylase; sequence MERTCLAVIL…EIEMTGCNNR (231 aa). Residues 10-13, Lys24, Gln77, 82-83, 105-107, Gly143, Glu157, Asn172, and Asn229 contribute to the UDP-N-acetyl-alpha-D-glucosamine site; these read LAAG, GT, and YGD. Residue Asp107 coordinates Mg(2+). Asn229 contributes to the Mg(2+) binding site. Residues 232–252 form a linker region; it reads AELAVIERFWQERRRREMMLA. Residues 253–453 are N-acetyltransferase; sequence GVTMIAPETV…AIKAAKRAKA (201 aa). UDP-N-acetyl-alpha-D-glucosamine-binding residues include Arg318 and Lys336. His348 acts as the Proton acceptor in catalysis. UDP-N-acetyl-alpha-D-glucosamine-binding residues include Tyr351 and Asn362. Acetyl-CoA contacts are provided by residues Ala365, 371 to 372, Ser390, Ser408, and Arg425; that span reads NY.

This sequence in the N-terminal section; belongs to the N-acetylglucosamine-1-phosphate uridyltransferase family. The protein in the C-terminal section; belongs to the transferase hexapeptide repeat family. As to quaternary structure, homotrimer. Mg(2+) is required as a cofactor.

It localises to the cytoplasm. It catalyses the reaction alpha-D-glucosamine 1-phosphate + acetyl-CoA = N-acetyl-alpha-D-glucosamine 1-phosphate + CoA + H(+). It carries out the reaction N-acetyl-alpha-D-glucosamine 1-phosphate + UTP + H(+) = UDP-N-acetyl-alpha-D-glucosamine + diphosphate. Its pathway is nucleotide-sugar biosynthesis; UDP-N-acetyl-alpha-D-glucosamine biosynthesis; N-acetyl-alpha-D-glucosamine 1-phosphate from alpha-D-glucosamine 6-phosphate (route II): step 2/2. The protein operates within nucleotide-sugar biosynthesis; UDP-N-acetyl-alpha-D-glucosamine biosynthesis; UDP-N-acetyl-alpha-D-glucosamine from N-acetyl-alpha-D-glucosamine 1-phosphate: step 1/1. It functions in the pathway bacterial outer membrane biogenesis; LPS lipid A biosynthesis. Its function is as follows. Catalyzes the last two sequential reactions in the de novo biosynthetic pathway for UDP-N-acetylglucosamine (UDP-GlcNAc). The C-terminal domain catalyzes the transfer of acetyl group from acetyl coenzyme A to glucosamine-1-phosphate (GlcN-1-P) to produce N-acetylglucosamine-1-phosphate (GlcNAc-1-P), which is converted into UDP-GlcNAc by the transfer of uridine 5-monophosphate (from uridine 5-triphosphate), a reaction catalyzed by the N-terminal domain. The polypeptide is Bifunctional protein GlmU (Rhizobium etli (strain CIAT 652)).